Here is a 199-residue protein sequence, read N- to C-terminus: Pyridoxine/pyridoxamine 5'-phosphate oxidase (199 aa).

FMN is bound by residues 45-50 (RVVLLK), 60-61 (FT), Arg-66, Lys-67, and Gln-89. Lys-50 contacts substrate. 3 residues coordinate substrate: Tyr-107, Arg-111, and Ser-115. FMN contacts are provided by residues 124 to 125 (QS) and Trp-169. 175-177 (RIH) is a binding site for substrate. Arg-179 is an FMN binding site.

The protein belongs to the pyridoxamine 5'-phosphate oxidase family. In terms of assembly, homodimer. The cofactor is FMN.

The enzyme catalyses pyridoxamine 5'-phosphate + O2 + H2O = pyridoxal 5'-phosphate + H2O2 + NH4(+). It catalyses the reaction pyridoxine 5'-phosphate + O2 = pyridoxal 5'-phosphate + H2O2. It functions in the pathway cofactor metabolism; pyridoxal 5'-phosphate salvage; pyridoxal 5'-phosphate from pyridoxamine 5'-phosphate: step 1/1. It participates in cofactor metabolism; pyridoxal 5'-phosphate salvage; pyridoxal 5'-phosphate from pyridoxine 5'-phosphate: step 1/1. In terms of biological role, catalyzes the oxidation of either pyridoxine 5'-phosphate (PNP) or pyridoxamine 5'-phosphate (PMP) into pyridoxal 5'-phosphate (PLP). The sequence is that of Pyridoxine/pyridoxamine 5'-phosphate oxidase from Ehrlichia chaffeensis (strain ATCC CRL-10679 / Arkansas).